The sequence spans 412 residues: tRNA (guanine-N(7)-)-methyltransferase non-catalytic subunit WDR4 (412 aa).

Alanine 2 carries the N-acetylalanine modification. WD repeat units lie at residues 3–40 (GSVG…IYDC), 50–90 (NKGE…LFRT), 94–131 (QCLS…SFSV), 137–174 (CGRL…VSWA), 180–218 (IESF…LWEY), 230–273 (ASLQ…IFQL), and 319–373 (PVGD…SYLK). Residues 377-412 (ERLQQQLEKKQRRRSPPPGPDGHAKKMRPGEATLSC) form a disordered region. 2 positions are modified to phosphoserine: serine 391 and serine 411.

It belongs to the WD repeat TRM82 family. In terms of assembly, non-catalytic component of the METTL1-WDR4 complex, composed of METTL1 and WDR4. Interacts with FEN1; the interaction is direct.

The protein resides in the nucleus. Its subcellular location is the chromosome. The protein operates within tRNA modification; N(7)-methylguanine-tRNA biosynthesis. Its function is as follows. Non-catalytic component of the METTL1-WDR4 methyltransferase complex required for the formation of N(7)-methylguanine in a subset of RNA species, such as tRNAs, mRNAs and microRNAs (miRNAs). In the METTL1-WDR4 methyltransferase complex, WDR4 acts as a scaffold for tRNA-binding. Required for the formation of N(7)-methylguanine at position 46 (m7G46) in a large subset of tRNAs that contain the 5'-RAGGU-3' motif within the variable loop. M7G46 interacts with C13-G22 in the D-loop to stabilize tRNA tertiary structure and protect tRNAs from decay. Also required for the formation of N(7)-methylguanine at internal sites in a subset of mRNAs. Also required for methylation of a specific subset of miRNAs, such as let-7. Independently of METTL1, also plays a role in genome stability: localizes at the DNA replication site and regulates endonucleolytic activities of FEN1. The sequence is that of tRNA (guanine-N(7)-)-methyltransferase non-catalytic subunit WDR4 from Homo sapiens (Human).